The primary structure comprises 541 residues: MAEASSLERQSPRVASCLVHSLCPREPSLQTTAVVSMGSADHQFNLAELLTQNYNLQEGCAEAPQCPDKPEEELDKDFIDQSSDMPLDELLALYGYESSDPISEQESEGGDTAPALPDMTLDKEQIAKDLLSGEEEEETQSSADDLTPSVTSHEASDLFHNQSGSRFLAGDNGPGSSASSDTEEDALPANKCKKEIMVGPQFQADLNILHLNRHCDKIYENEDQLLWSPSVLPEREVEEFLYRAVKRRWQEMAGPQIPEGEVVKDSEQALYELVKCNFNVEEALRRLRFNVKVIRDGLCAWSEEECRNFEHGFRVHGKNFHLIQANKVRTRSVGECVEYYYLWKKSERYDYFAQQTRLGRRKFVSSGTTDTEQDLDGLDPDGHARLHSEAGVPVEPLNVDIEAGGLDQPGVGSDDLPSSEPGPRPFQQLDEPPAVPSLQQPTSLAASAELPPAAAAAPEPGTSPRLPVDLALPEELPLVSSPVALSEDTAEPMAPAQVALSVTEFGLIGIGDVNPFLTGHPACPTSTLHSEPLSQCNVMTC.

Ser11 carries the phosphoserine modification. Disordered regions lie at residues Asp100 to Met119 and Leu131 to Ala186. The span at Gln140–Ser165 shows a compositional bias: polar residues. The ELM2 domain maps to Lys194–Val291. The SANT domain maps to Asp296 to Arg348. A disordered region spans residues Val364–Gln440.

Part of a complex containing at least CDYL, MIER1, MIER2, HDAC1 and HDAC2.

Its subcellular location is the nucleus. In terms of biological role, transcriptional repressor. The chain is Mesoderm induction early response protein 2 (Mier2) from Mus musculus (Mouse).